Here is a 289-residue protein sequence, read N- to C-terminus: Probable branched-chain-amino-acid aminotransferase (289 aa).

Lysine 154 is modified (N6-(pyridoxal phosphate)lysine).

Belongs to the class-IV pyridoxal-phosphate-dependent aminotransferase family. Pyridoxal 5'-phosphate serves as cofactor.

The enzyme catalyses L-leucine + 2-oxoglutarate = 4-methyl-2-oxopentanoate + L-glutamate. The catalysed reaction is L-isoleucine + 2-oxoglutarate = (S)-3-methyl-2-oxopentanoate + L-glutamate. It carries out the reaction L-valine + 2-oxoglutarate = 3-methyl-2-oxobutanoate + L-glutamate. The protein operates within amino-acid biosynthesis; L-isoleucine biosynthesis; L-isoleucine from 2-oxobutanoate: step 4/4. It participates in amino-acid biosynthesis; L-leucine biosynthesis; L-leucine from 3-methyl-2-oxobutanoate: step 4/4. Its pathway is amino-acid biosynthesis; L-valine biosynthesis; L-valine from pyruvate: step 4/4. Acts on leucine, isoleucine and valine. This is Probable branched-chain-amino-acid aminotransferase (ilvE) from Rickettsia bellii (strain RML369-C).